A 179-amino-acid chain; its full sequence is Large ribosomal subunit protein uL5 (179 aa).

This sequence belongs to the universal ribosomal protein uL5 family. In terms of assembly, part of the 50S ribosomal subunit; part of the 5S rRNA/L5/L18/L25 subcomplex. Contacts the 5S rRNA and the P site tRNA. Forms a bridge to the 30S subunit in the 70S ribosome.

This is one of the proteins that bind and probably mediate the attachment of the 5S RNA into the large ribosomal subunit, where it forms part of the central protuberance. In the 70S ribosome it contacts protein S13 of the 30S subunit (bridge B1b), connecting the 2 subunits; this bridge is implicated in subunit movement. Contacts the P site tRNA; the 5S rRNA and some of its associated proteins might help stabilize positioning of ribosome-bound tRNAs. The chain is Large ribosomal subunit protein uL5 from Neisseria gonorrhoeae (strain ATCC 700825 / FA 1090).